The following is a 98-amino-acid chain: Large ribosomal subunit protein eL21 (98 aa).

Over residues 1-17 (MQRSRGFRSKSRRKMTK) the composition is skewed to basic residues. The interval 1–28 (MQRSRGFRSKSRRKMTKVVREGRSNPIT) is disordered.

It belongs to the eukaryotic ribosomal protein eL21 family.

The sequence is that of Large ribosomal subunit protein eL21 from Methanobrevibacter smithii (strain ATCC 35061 / DSM 861 / OCM 144 / PS).